The sequence spans 674 residues: Polyunsaturated fatty acid 5-lipoxygenase (674 aa).

The region spanning 2–118 is the PLAT domain; the sequence is PSYTVTVATG…EIVLRDGRAK (117 aa). Ca(2+)-binding residues include Gly17, Thr18, Asp19, Asn44, Asp45, Glu47, Asp79, and Asp80. The Lipoxygenase domain maps to 119-674; the sequence is LARDDQIHIL…PDRIPNSVAI (556 aa). At Ser272 the chain carries Phosphoserine. Fe cation contacts are provided by His368 and His373. Phosphoserine is present on Ser524. The Fe cation site is built by His551, Asn555, and Ile674.

The protein belongs to the lipoxygenase family. In terms of assembly, homodimer. Interacts with ALOX5AP and LTC4S. Interacts with COTL1, the interaction is required for stability and efficient catalytic activity. Interacts with PIK3R1; this interaction bridges ALOX5 with CD40 after CD40 ligation in B cells and leads to the production of reactive oxygen species (ROS). Interacts (via PLAT domain) with DICER1 (via Dicer dsRNA-binding fold domain); this interaction enhances arachidonate 5-lipoxygenase activity and modifies the miRNA precursor processing activity of DICER1. It depends on Fe cation as a cofactor. In terms of processing, serine phosphorylation by MAPKAPK2 is stimulated by arachidonic acid. Phosphorylation on Ser-524 by PKA has an inhibitory effect. Phosphorylation on Ser-272 prevents export from the nucleus. Phosphorylation at Ser-524 is stimulated by 8-bromo-3',5'-cyclic AMP or prostaglandin E2. As to expression, expressed in skin Langerhans cells and their emigrated counterparts in draining lymph nodes. Highly expressed in circulating leukocytes.

It localises to the cytoplasm. It is found in the nucleus matrix. Its subcellular location is the nucleus membrane. The protein localises to the perinuclear region. The protein resides in the cytosol. It localises to the nucleus envelope. It is found in the nucleus intermembrane space. The enzyme catalyses (5Z,8Z,11Z,14Z)-eicosatetraenoate + O2 = (5S)-hydroperoxy-(6E,8Z,11Z,14Z)-eicosatetraenoate. It carries out the reaction (5Z,8Z,11Z,14Z)-eicosatetraenoate + O2 = leukotriene A4 + H2O. It catalyses the reaction (5Z,8Z,11Z,14Z)-eicosatetraenoate + O2 = (8S)-hydroperoxy-(5Z,9E,11Z,14Z)-eicosatetraenoate. The catalysed reaction is (5Z,8Z,11Z,14Z)-eicosatetraenoate + O2 = (12S)-hydroperoxy-(5Z,8Z,10E,14Z)-eicosatetraenoate. The enzyme catalyses 18-HEPE + O2 = (5S)-hydroperoxy-18-hydroxy-(7E,9E,11Z,14Z,16E)-eicosapentaenoate. It carries out the reaction (18R)-hydroxy-(5Z,8Z,11Z,14Z,16E)-eicosapentaenoate + O2 = (5S)-hydroperoxy-(18R)-hydroxy-(6E,8Z,11Z,14Z,16E)-eicosapentaenoate. It catalyses the reaction (18S)-hydroxy-(5Z,8Z,11Z,14Z,16E)-eicosapentaenoate + O2 = (5S)-hydroperoxy-(18S)-hydroxy-(6E,8Z,11Z,14Z,16E)-eicosapentaenoate. The catalysed reaction is (5S)-hydroperoxy-(18S)-hydroxy-(6E,8Z,11Z,14Z,16E)-eicosapentaenoate = (5S,6S)-epoxy-(18S)-hydroxy-(7E,9E,11Z,14Z,16E)-eicosapentaenoate + H2O. The enzyme catalyses (5S)-hydroperoxy-(18R)-hydroxy-(6E,8Z,11Z,14Z,16E)-eicosapentaenoate = (5S,6S)-epoxy-(18R)-hydroxy-(7E,9E,11Z,14Z,16E)-eicosapentaenoate + H2O. It carries out the reaction (5S)-hydroperoxy-18-hydroxy-(7E,9E,11Z,14Z,16E)-eicosapentaenoate = (5S,6S)-epoxy-18-hydroxy-(7E,9E,11Z,14Z,16E)-eicosapentaenoate + H2O. It catalyses the reaction (15S)-hydroxy-(5Z,8Z,11Z,13E)-eicosatetraenoate + O2 = (5S)-hydroperoxy-(15S)-hydroxy-(6E,8Z,11Z,13E)-eicosatetraenoate. The catalysed reaction is (5S)-hydroperoxy-(6E,8Z,11Z,14Z)-eicosatetraenoate = leukotriene A4 + H2O. The enzyme catalyses (5Z,8Z)-eicosadienoate + O2 = (5S)-hydroperoxy-(6E,8Z)-eicosadienoate. It carries out the reaction (12S)-hydroxy-(5Z,8Z,10E,14Z)-eicosatetraenoate + O2 = (5S)-hydroperoxy-(12S)-hydroxy-(6E,8Z,10E,14Z)-eicosatetraenoate. It catalyses the reaction (5Z,8Z,11Z,14Z,17Z)-eicosapentaenoate + O2 = 5-hydroperoxy-(6E,8Z,11Z,14Z,17Z)-eicosapentaenoate. The catalysed reaction is (4Z,7Z,10Z,13Z,16Z,19Z)-docosahexaenoate + O2 = (14S)-hydroperoxy-(4Z,7Z,10Z,12E,16Z,19Z)-docosahexaenoate. The enzyme catalyses (4Z,7Z,10Z,13Z,16Z,19Z)-docosahexaenoate + O2 = (7S)-hydroperoxy-(4Z,8E,10Z,13Z,16Z,19Z)-docosahexaenoate. It carries out the reaction (4Z,7Z,10Z,13Z,16Z,19Z)-docosahexaenoate + O2 = (17S)-hydroperoxy-(4Z,7Z,10Z,13Z,15E,19Z)-docosahexaenoate. It functions in the pathway lipid metabolism; leukotriene A4 biosynthesis. Catalyzes the oxygenation of arachidonate to 5-hydroperoxyeicosatetraenoate (5-HPETE) followed by the dehydration to 5,6- epoxyeicosatetraenoate (Leukotriene A4/LTA4), the first two steps in the biosynthesis of leukotrienes, which are potent mediators of inflammation. Also catalyzes the oxygenation of arachidonic acid into 8-hydroperoxyicosatetraenoic acid (8-HPETE) and 12-hydroperoxyicosatetraenoic acid (12-HPETE). Displays lipoxin synthase activity being able to convert (15S)-HETE into a conjugate tetraene. Although arachidonate is the preferred substrate, this enzyme can also metabolize oxidized fatty acids derived from arachidonate such as (15S)-HETE, eicosapentaenoate (EPA) such as (18R)- and (18S)-HEPE or docosahexaenoate (DHA) which lead to the formation of specialized pro-resolving mediators (SPM) lipoxin and resolvins E and D respectively, therefore it participates in anti-inflammatory responses. Oxidation of DHA directly inhibits endothelial cell proliferation and sprouting angiogenesis via peroxisome proliferator-activated receptor gamma (PPARgamma). It does not catalyze the oxygenation of linoleic acid and does not convert (5S)-HETE to lipoxin isomers. In addition to inflammatory processes, participates in dendritic cell migration, wound healing through an antioxidant mechanism based on heme oxygenase-1 (HO-1) regulation expression, monocyte adhesion to the endothelium via ITGAM expression on monocytes. Moreover, it helps establish an adaptive humoral immunity by regulating primary resting B cells and follicular helper T cells and participates in the CD40-induced production of reactive oxygen species (ROS) after CD40 ligation in B cells through interaction with PIK3R1 that bridges ALOX5 with CD40. May also play a role in glucose homeostasis, regulation of insulin secretion and palmitic acid-induced insulin resistance via AMPK. Can regulate bone mineralization and fat cell differentiation increases in induced pluripotent stem cells. The polypeptide is Polyunsaturated fatty acid 5-lipoxygenase (Mus musculus (Mouse)).